We begin with the raw amino-acid sequence, 138 residues long: Sec-independent protein translocase protein TatB (138 aa).

The helical transmembrane segment at 2 to 18 threads the bilayer; that stretch reads SFGEIIVILVVAILVLG. Residues 109 to 138 are disordered; the sequence is NNLSGQNLNTEEKPNLSKLETQDKNGKINV. The span at 118-138 shows a compositional bias: basic and acidic residues; the sequence is TEEKPNLSKLETQDKNGKINV.

It belongs to the TatB family. As to quaternary structure, the Tat system comprises two distinct complexes: a TatABC complex, containing multiple copies of TatA, TatB and TatC subunits, and a separate TatA complex, containing only TatA subunits. Substrates initially bind to the TatABC complex, which probably triggers association of the separate TatA complex to form the active translocon.

It is found in the cell inner membrane. Part of the twin-arginine translocation (Tat) system that transports large folded proteins containing a characteristic twin-arginine motif in their signal peptide across membranes. Together with TatC, TatB is part of a receptor directly interacting with Tat signal peptides. TatB may form an oligomeric binding site that transiently accommodates folded Tat precursor proteins before their translocation. This Campylobacter jejuni subsp. jejuni serotype O:2 (strain ATCC 700819 / NCTC 11168) protein is Sec-independent protein translocase protein TatB.